Reading from the N-terminus, the 201-residue chain is Small ribosomal subunit protein uS4 (201 aa).

The segment at 26–46 (LARRAYAPGDHGRDRRGKLSE) is disordered. A compositionally biased stretch (basic and acidic residues) spans 35 to 44 (DHGRDRRGKL). Positions 93-156 (RRLDNMVYRL…KNLDIIKNAV (64 aa)) constitute an S4 RNA-binding domain.

It belongs to the universal ribosomal protein uS4 family. In terms of assembly, part of the 30S ribosomal subunit. Contacts protein S5. The interaction surface between S4 and S5 is involved in control of translational fidelity.

Its function is as follows. One of the primary rRNA binding proteins, it binds directly to 16S rRNA where it nucleates assembly of the body of the 30S subunit. Functionally, with S5 and S12 plays an important role in translational accuracy. In Limosilactobacillus reuteri (strain DSM 20016) (Lactobacillus reuteri), this protein is Small ribosomal subunit protein uS4.